The primary structure comprises 361 residues: Putative agmatine deiminase (361 aa).

Residue C354 is the Amidino-cysteine intermediate of the active site.

This sequence belongs to the agmatine deiminase family.

It carries out the reaction agmatine + H2O = N-carbamoylputrescine + NH4(+). The chain is Putative agmatine deiminase from Streptococcus pneumoniae (strain 70585).